Reading from the N-terminus, the 462-residue chain is Microspherule protein 1 (462 aa).

N-acetylmethionine is present on Met-1. The segment at 1–130 is disordered; sequence MDKDSQGLLD…KSKQPLQVTK (130 aa). Residue Ser-22 is modified to Phosphoserine. Basic residues predominate over residues 43 to 55; sequence PKRRSSSRFIKRK. Low complexity predominate over residues 81 to 90; sequence SGRCSGSEPS. Phosphoserine is present on Ser-102. Thr-103 carries the post-translational modification Phosphothreonine. The span at 103–112 shows a compositional bias: pro residues; sequence TPVPPSPAPT. Ser-108 is subject to Phosphoserine. The short motif at 113-123 is the Nuclear localization signal element; that stretch reads PGLTKRVKKSK. Residues Lys-123 and Lys-130 each carry the N6-acetyllysine modification. At Ser-282 the chain carries Phosphoserine. Residues 301–335 are a coiled coil; sequence LEHELTVADRRQKREIRQLEQELHKWQVLVDSITG. The 57-residue stretch at 363–419 folds into the FHA domain; that stretch reads ITLGRATKDNQIDVDLSLEGPAWKISRKQGVIKLKNNGDFFIANEGRRPIYIDGRPV. Residues 389–396 carry the UBR5-degron motif; sequence RKQGVIKL.

As to quaternary structure, component of the chromatin remodeling INO80 complex; specifically part of a complex module associated with the N-terminus of INO80. Component of some MLL1/MLL complex, at least composed of the core components KMT2A/MLL1, ASH2L, HCFC1, WDR5 and RBBP5, as well as the facultative components BACC1, CHD8, E2F6, HSP70, INO80C, KANSL1, LAS1L, MAX, MCRS1, MGA, KAT8/MOF, PELP1, PHF20, PRP31, RING2, RUVB1/TIP49A, RUVB2/TIP49B, SENP3, TAF1, TAF4, TAF6, TAF7, TAF9 and TEX10. Component of the NSL complex at least composed of MOF/KAT8, KANSL1, KANSL2, KANSL3, MCRS1, PHF20, OGT1/OGT, WDR5 and HCFC1. Interacts with NOP2. Interacts with PINX1. Interacts with TERT. Interacts with CCDC85B. Interacts with DAXX. Interacts (via N-terminus) with FMR1 (via phosphorylated form). Interacts with FXR1 and FXR2. Interacts (via C-terminus) with NDE1 (via C-terminus); phosphorylation of NDE1 inhibits the interaction. Interacts (via C-terminus) with ZNF375. Interacts (via C-terminus) with active GTP-bound RHEB (via N-terminus) under conditions of high amino acid concentration; the interaction promotes mTORC1 complex activation by RHEB. Interacts (via N-terminus) with the mTORC1 complex; the interaction ensures mTORC1 activation by RHEB. Interacts with DYNC1I1; the interaction is required for the proper distribution of centriolar satellites. Interacts with TTBK2; the interaction is required for recruitment of TTBK2 to the mother centriole. Interacts with KIF2A; the interaction occurs during mitosis and facilitates chromosome alignment. Post-translationally, ubiquitinated by UBR5 when not assembled in the INO80 complex, leading to its degradation: UBR5 recognizes and binds a degron that is not accessible when MCRS1 is part of the INO80 complex. Phosphorylated by AURKA on Ser-35 and/or Ser-36 during mitosis which is required for kinetochore fiber assembly and mitotic progression but not for spindle localization or for chromosome-induced microtuble aster formation. Also phosphorylated by AURKA on Ser-85 and/or Ser-87. Phosphorylated by TTK/MPS1 which enhances recruitment of KIF2A to the minus end of spindle microtubules and facilitates precise chromosome segregation.

The protein resides in the nucleus. The protein localises to the nucleolus. It is found in the cytoplasm. Its subcellular location is the cytoskeleton. It localises to the microtubule organizing center. The protein resides in the centrosome. The protein localises to the spindle pole. It is found in the chromosome. Its subcellular location is the centromere. It localises to the kinetochore. The protein resides in the lysosome. The protein localises to the centriolar satellite. Functionally, modulates the transcription repressor activity of DAXX by recruiting it to the nucleolus. As part of the NSL complex it may be involved in acetylation of nucleosomal histone H4 on several lysine residues. Putative regulatory component of the chromatin remodeling INO80 complex which is involved in transcriptional regulation, DNA replication and probably DNA repair. May also be an inhibitor of TERT telomerase activity. Binds to G-quadruplex structures in mRNA. Binds to RNA homomer poly(G) and poly(U). Maintains RHEB at the lysosome in its active GTP-bound form and prevents its interaction with the mTORC1 complex inhibitor TSC2, ensuring activation of the mTORC1 complex by RHEB. Stabilizes the minus ends of kinetochore fibers by protecting them from depolymerization, ensuring functional spindle assembly during mitosis. Following phosphorylation by TTK/MPS1, enhances recruitment of KIF2A to the minus ends of mitotic spindle microtubules which promotes chromosome alignment. Regulates the morphology of microtubule minus ends in mitotic spindle by maintaining them in a closed conformation characterized by the presence of an electron-dense cap. Regulates G2/M transition and spindle assembly during oocyte meiosis. Mediates histone modifications and transcriptional regulation in germinal vesicle oocytes which are required for meiotic progression. Also regulates microtubule nucleation and spindle assembly by activating aurora kinases during oocyte meiosis. Contributes to the establishment of centriolar satellites and also plays a role in primary cilium formation by recruiting TTBK2 to the mother centriole which is necessary for removal of the CP110 cap from the mother centriole, an early step in ciliogenesis. Required for epiblast development during early embryogenesis. Essential for cell viability. The polypeptide is Microspherule protein 1 (Mcrs1) (Mus musculus (Mouse)).